Consider the following 391-residue polypeptide: Carbamoyl phosphate synthase small chain (391 aa).

The tract at residues 1–189 (MIKSALLVLE…DLPAAKQPED (189 aa)) is CPSase. L-glutamine contacts are provided by serine 47, glycine 241, and glycine 243. Positions 193–380 (HVVAYDYGVK…IELIEAYRAS (188 aa)) constitute a Glutamine amidotransferase type-1 domain. The active-site Nucleophile is cysteine 269. Residues leucine 270, glutamine 273, asparagine 311, glycine 313, and phenylalanine 314 each contribute to the L-glutamine site. Catalysis depends on residues histidine 353 and glutamate 355.

This sequence belongs to the CarA family. As to quaternary structure, composed of two chains; the small (or glutamine) chain promotes the hydrolysis of glutamine to ammonia, which is used by the large (or ammonia) chain to synthesize carbamoyl phosphate. Tetramer of heterodimers (alpha,beta)4.

It carries out the reaction hydrogencarbonate + L-glutamine + 2 ATP + H2O = carbamoyl phosphate + L-glutamate + 2 ADP + phosphate + 2 H(+). The catalysed reaction is L-glutamine + H2O = L-glutamate + NH4(+). Its pathway is amino-acid biosynthesis; L-arginine biosynthesis; carbamoyl phosphate from bicarbonate: step 1/1. It participates in pyrimidine metabolism; UMP biosynthesis via de novo pathway; (S)-dihydroorotate from bicarbonate: step 1/3. Its function is as follows. Small subunit of the glutamine-dependent carbamoyl phosphate synthetase (CPSase). CPSase catalyzes the formation of carbamoyl phosphate from the ammonia moiety of glutamine, carbonate, and phosphate donated by ATP, constituting the first step of 2 biosynthetic pathways, one leading to arginine and/or urea and the other to pyrimidine nucleotides. The small subunit (glutamine amidotransferase) binds and cleaves glutamine to supply the large subunit with the substrate ammonia. The chain is Carbamoyl phosphate synthase small chain from Yersinia pestis.